The primary structure comprises 381 residues: Chaperone protein DnaJ (381 aa).

In terms of domain architecture, J spans 5–70; sequence DFYEVLGVGR…QKKAAYDQYG (66 aa). The CR-type zinc-finger motif lies at 136–214; that stretch reads GCSKEIEVPT…CHGQGRKQKT (79 aa). Zn(2+) is bound by residues C149, C152, C166, C169, C188, C191, C202, and C205. 4 CXXCXGXG motif repeats span residues 149 to 156, 166 to 173, 188 to 195, and 202 to 209; these read CDACDGSG, CGTCHGHG, CPTCHGKG, and CNVCHGQG.

Belongs to the DnaJ family. In terms of assembly, homodimer. Zn(2+) is required as a cofactor.

Its subcellular location is the cytoplasm. Its function is as follows. Participates actively in the response to hyperosmotic and heat shock by preventing the aggregation of stress-denatured proteins and by disaggregating proteins, also in an autonomous, DnaK-independent fashion. Unfolded proteins bind initially to DnaJ; upon interaction with the DnaJ-bound protein, DnaK hydrolyzes its bound ATP, resulting in the formation of a stable complex. GrpE releases ADP from DnaK; ATP binding to DnaK triggers the release of the substrate protein, thus completing the reaction cycle. Several rounds of ATP-dependent interactions between DnaJ, DnaK and GrpE are required for fully efficient folding. Also involved, together with DnaK and GrpE, in the DNA replication of plasmids through activation of initiation proteins. The protein is Chaperone protein DnaJ of Vibrio cholerae serotype O1 (strain ATCC 39541 / Classical Ogawa 395 / O395).